Reading from the N-terminus, the 220-residue chain is Octanoyltransferase (220 aa).

The 181-residue stretch at 31–211 folds into the BPL/LPL catalytic domain; the sequence is GTAADHLLLL…HFARIFDFEM (181 aa). Residues 76–83, 143–145, and 156–158 contribute to the substrate site; these read RGGDVTYH, AIG, and GFA. The active-site Acyl-thioester intermediate is the Cys174.

It belongs to the LipB family.

The protein localises to the cytoplasm. It catalyses the reaction octanoyl-[ACP] + L-lysyl-[protein] = N(6)-octanoyl-L-lysyl-[protein] + holo-[ACP] + H(+). Its pathway is protein modification; protein lipoylation via endogenous pathway; protein N(6)-(lipoyl)lysine from octanoyl-[acyl-carrier-protein]: step 1/2. In terms of biological role, catalyzes the transfer of endogenously produced octanoic acid from octanoyl-acyl-carrier-protein onto the lipoyl domains of lipoate-dependent enzymes. Lipoyl-ACP can also act as a substrate although octanoyl-ACP is likely to be the physiological substrate. This is Octanoyltransferase from Solibacter usitatus (strain Ellin6076).